A 194-amino-acid chain; its full sequence is UPF0301 protein BQ03640 (194 aa).

It belongs to the UPF0301 (AlgH) family.

The sequence is that of UPF0301 protein BQ03640 from Bartonella quintana (strain Toulouse) (Rochalimaea quintana).